The primary structure comprises 607 residues: SNW/SKI-interacting protein A (607 aa).

Disordered regions lie at residues 29–77 (ERYG…GGAF), 178–205 (AQPK…AAFN), 217–265 (EMAQ…IPPC), 327–434 (LQLK…DRDR), and 516–607 (KVMK…ERGR). Over residues 35-49 (SAQSDAAAAAAKPSG) the composition is skewed to low complexity. The segment at 190–353 (SKFIKYKPSQ…QKARMERTGA (164 aa)) is SNW. Pro residues predominate over residues 240-251 (PPVPVMHSPPRP). 2 coiled-coil regions span residues 313-349 (AREA…ARME) and 391-418 (EREA…LEAR). Composition is skewed to basic and acidic residues over residues 327–339 (LQLK…EQEL), 379–434 (EQPR…DRDR), 516–527 (KVMKTDRFKPDK), 535–550 (RSGK…KQEE), and 562–571 (EVKKGKKAVE).

The protein belongs to the SNW family. In terms of assembly, interacts with FLO6/SIP4. Interacts with DIS1. In terms of tissue distribution, widely expressed.

The protein localises to the nucleus. Its function is as follows. Acts as a positive regulator of drought and salt tolerance. Acts as a positive regulator of cell viability. The polypeptide is SNW/SKI-interacting protein A (Oryza sativa subsp. japonica (Rice)).